We begin with the raw amino-acid sequence, 91 residues long: Small ribosomal subunit protein uS19 (91 aa).

Belongs to the universal ribosomal protein uS19 family.

Functionally, protein S19 forms a complex with S13 that binds strongly to the 16S ribosomal RNA. This chain is Small ribosomal subunit protein uS19, found in Janthinobacterium sp. (strain Marseille) (Minibacterium massiliensis).